Here is a 92-residue protein sequence, read N- to C-terminus: Protein S100-B (92 aa).

Position 2 is an N-acetylserine (S2). 2 EF-hand domains span residues 13–48 (DVFHQYSGREGDKHKLKKSELKELINNELSHFLEEI) and 49–84 (KEQEVVDKVMETLDSDGDGECDFQEFMAFVAMITTA). Position 16 (H16) interacts with Zn(2+). S19, E22, and D24 together coordinate Ca(2+). H26 is a binding site for Zn(2+). Ca(2+) contacts are provided by D62, D64, D66, E68, and E73. Residues H86 and H91 each contribute to the Zn(2+) site.

It belongs to the S-100 family. In terms of assembly, dimer of either two alpha chains, or two beta chains, or one alpha and one beta chain. The S100B dimer binds two molecules of STK38. Interacts with CACYBP in a calcium-dependent manner. Interacts with ATAD3A; this interaction probably occurs in the cytosol prior to ATAD3A mitochondrial targeting. Interacts with S100A6. The S100B dimer interacts with two molecules of CAPZA1. Interacts with AGER. Interacts with PPP5C (via TPR repeats); the interaction is calcium-dependent and modulates PPP5C activity. Interacts with TPPP; this interaction inhibits TPPP dimerization. Interacts with isoform CLSTN3beta of CLSTN3; interaction promotes secretion.

Its subcellular location is the cytoplasm. The protein resides in the nucleus. It localises to the secreted. Functionally, small zinc- and- and calcium-binding protein that is highly expressed in astrocytes and constitutes one of the most abundant soluble proteins in brain. Weakly binds calcium but binds zinc very tightly-distinct binding sites with different affinities exist for both ions on each monomer. Physiological concentrations of potassium ion antagonize the binding of both divalent cations, especially affecting high-affinity calcium-binding sites. Acts as a neurotrophic factor that promotes astrocytosis and axonal proliferation. Involved in innervation of thermogenic adipose tissue by acting as an adipocyte-derived neurotrophic factor that promotes sympathetic innervation of adipose tissue. Binds to and initiates the activation of STK38 by releasing autoinhibitory intramolecular interactions within the kinase. Interaction with AGER after myocardial infarction may play a role in myocyte apoptosis by activating ERK1/2 and p53/TP53 signaling. Could assist ATAD3A cytoplasmic processing, preventing aggregation and favoring mitochondrial localization. May mediate calcium-dependent regulation on many physiological processes by interacting with other proteins, such as TPR-containing proteins, and modulating their activity. The sequence is that of Protein S100-B (S100B) from Bos taurus (Bovine).